We begin with the raw amino-acid sequence, 297 residues long: Lipoyl synthase (297 aa).

[4Fe-4S] cluster is bound by residues Cys-40, Cys-45, Cys-51, Cys-67, Cys-71, Cys-74, and Ser-280. The Radical SAM core domain maps to 53–269 (AVRKTATFMI…KEIALSKGFS (217 aa)).

Belongs to the radical SAM superfamily. Lipoyl synthase family. [4Fe-4S] cluster serves as cofactor.

The protein resides in the cytoplasm. The enzyme catalyses [[Fe-S] cluster scaffold protein carrying a second [4Fe-4S](2+) cluster] + N(6)-octanoyl-L-lysyl-[protein] + 2 oxidized [2Fe-2S]-[ferredoxin] + 2 S-adenosyl-L-methionine + 4 H(+) = [[Fe-S] cluster scaffold protein] + N(6)-[(R)-dihydrolipoyl]-L-lysyl-[protein] + 4 Fe(3+) + 2 hydrogen sulfide + 2 5'-deoxyadenosine + 2 L-methionine + 2 reduced [2Fe-2S]-[ferredoxin]. Its pathway is protein modification; protein lipoylation via endogenous pathway; protein N(6)-(lipoyl)lysine from octanoyl-[acyl-carrier-protein]. In terms of biological role, catalyzes the radical-mediated insertion of two sulfur atoms into the C-6 and C-8 positions of the octanoyl moiety bound to the lipoyl domains of lipoate-dependent enzymes, thereby converting the octanoylated domains into lipoylated derivatives. In Bacillus cereus (strain ATCC 14579 / DSM 31 / CCUG 7414 / JCM 2152 / NBRC 15305 / NCIMB 9373 / NCTC 2599 / NRRL B-3711), this protein is Lipoyl synthase.